The following is a 227-amino-acid chain: Monoamine regulon transcriptional regulator (227 aa).

The 66-residue stretch at 155 to 220 (EDDLPAILTA…ELVSRTWMPA (66 aa)) folds into the HTH luxR-type domain. The H-T-H motif DNA-binding region spans 179 to 198 (NKLIARQLDISLSTVKTHLR).

In terms of biological role, positive regulatory protein for the induction of arylsulfatase synthesis (maoA), tyramine oxidase (tynA), maoC, maoE/F operon, and atsB/A operon which are all regulated by monoamines, and included under the common term of monoamine regulon. The chain is Monoamine regulon transcriptional regulator (moaR) from Klebsiella aerogenes (Enterobacter aerogenes).